Consider the following 221-residue polypeptide: 7-cyano-7-deazaguanine synthase (221 aa).

An ATP-binding site is contributed by 7-17 (LSGGLDSAVSL). Residues C192, C200, C203, and C206 each contribute to the Zn(2+) site.

The protein belongs to the QueC family. In terms of assembly, homodimer. Requires Zn(2+) as cofactor.

The catalysed reaction is 7-carboxy-7-deazaguanine + NH4(+) + ATP = 7-cyano-7-deazaguanine + ADP + phosphate + H2O + H(+). Its pathway is purine metabolism; 7-cyano-7-deazaguanine biosynthesis. In terms of biological role, catalyzes the ATP-dependent conversion of 7-carboxy-7-deazaguanine (CDG) to 7-cyano-7-deazaguanine (preQ(0)). The chain is 7-cyano-7-deazaguanine synthase from Pelotomaculum thermopropionicum (strain DSM 13744 / JCM 10971 / SI).